Reading from the N-terminus, the 529-residue chain is Bifunctional purine biosynthesis protein PurH (529 aa).

Residues 1-148 (MQQPRPVRRA…KNHKDVAIVV (148 aa)) enclose the MGS-like domain.

This sequence belongs to the PurH family.

The enzyme catalyses (6R)-10-formyltetrahydrofolate + 5-amino-1-(5-phospho-beta-D-ribosyl)imidazole-4-carboxamide = 5-formamido-1-(5-phospho-D-ribosyl)imidazole-4-carboxamide + (6S)-5,6,7,8-tetrahydrofolate. The catalysed reaction is IMP + H2O = 5-formamido-1-(5-phospho-D-ribosyl)imidazole-4-carboxamide. Its pathway is purine metabolism; IMP biosynthesis via de novo pathway; 5-formamido-1-(5-phospho-D-ribosyl)imidazole-4-carboxamide from 5-amino-1-(5-phospho-D-ribosyl)imidazole-4-carboxamide (10-formyl THF route): step 1/1. It participates in purine metabolism; IMP biosynthesis via de novo pathway; IMP from 5-formamido-1-(5-phospho-D-ribosyl)imidazole-4-carboxamide: step 1/1. This is Bifunctional purine biosynthesis protein PurH from Cronobacter sakazakii (strain ATCC BAA-894) (Enterobacter sakazakii).